The sequence spans 552 residues: CTP synthase (552 aa).

The amidoligase domain stretch occupies residues Met-1–Leu-271. Ser-18 provides a ligand contact to CTP. Ser-18 is a UTP binding site. ATP contacts are provided by residues Ser-19 to Leu-24 and Asp-76. Mg(2+) is bound by residues Asp-76 and Glu-145. Residues Asp-152–Glu-154, Lys-192–Gln-197, and Lys-228 each bind CTP. UTP is bound by residues Lys-192–Gln-197 and Lys-228. Residues Thr-296–Gly-546 enclose the Glutamine amidotransferase type-1 domain. Gly-359 contributes to the L-glutamine binding site. Cys-386 serves as the catalytic Nucleophile; for glutamine hydrolysis. L-glutamine is bound by residues Leu-387–Gln-390, Glu-410, and Arg-472. Active-site residues include His-519 and Glu-521.

This sequence belongs to the CTP synthase family. As to quaternary structure, homotetramer.

It carries out the reaction UTP + L-glutamine + ATP + H2O = CTP + L-glutamate + ADP + phosphate + 2 H(+). It catalyses the reaction L-glutamine + H2O = L-glutamate + NH4(+). The catalysed reaction is UTP + NH4(+) + ATP = CTP + ADP + phosphate + 2 H(+). The protein operates within pyrimidine metabolism; CTP biosynthesis via de novo pathway; CTP from UDP: step 2/2. With respect to regulation, allosterically activated by GTP, when glutamine is the substrate; GTP has no effect on the reaction when ammonia is the substrate. The allosteric effector GTP functions by stabilizing the protein conformation that binds the tetrahedral intermediate(s) formed during glutamine hydrolysis. Inhibited by the product CTP, via allosteric rather than competitive inhibition. In terms of biological role, catalyzes the ATP-dependent amination of UTP to CTP with either L-glutamine or ammonia as the source of nitrogen. Regulates intracellular CTP levels through interactions with the four ribonucleotide triphosphates. The protein is CTP synthase of Thermobifida fusca (strain YX).